The primary structure comprises 421 residues: Glutamyl-tRNA reductase (421 aa).

Substrate-binding positions include 49-52 (TCNR), Ser-109, 114-116 (EPQ), and Gln-120. Residue Cys-50 is the Nucleophile of the active site. Residue 189–194 (GLGQIG) participates in NADP(+) binding.

This sequence belongs to the glutamyl-tRNA reductase family. As to quaternary structure, homodimer.

The enzyme catalyses (S)-4-amino-5-oxopentanoate + tRNA(Glu) + NADP(+) = L-glutamyl-tRNA(Glu) + NADPH + H(+). It participates in porphyrin-containing compound metabolism; protoporphyrin-IX biosynthesis; 5-aminolevulinate from L-glutamyl-tRNA(Glu): step 1/2. Functionally, catalyzes the NADPH-dependent reduction of glutamyl-tRNA(Glu) to glutamate 1-semialdehyde (GSA). This Limosilactobacillus reuteri (strain DSM 20016) (Lactobacillus reuteri) protein is Glutamyl-tRNA reductase.